Here is a 178-residue protein sequence, read N- to C-terminus: Large ribosomal subunit protein uL6 (178 aa).

It belongs to the universal ribosomal protein uL6 family. As to quaternary structure, part of the 50S ribosomal subunit.

Functionally, this protein binds to the 23S rRNA, and is important in its secondary structure. It is located near the subunit interface in the base of the L7/L12 stalk, and near the tRNA binding site of the peptidyltransferase center. The sequence is that of Large ribosomal subunit protein uL6 from Buchnera aphidicola subsp. Schizaphis graminum (strain Sg).